We begin with the raw amino-acid sequence, 194 residues long: Peptidyl-tRNA hydrolase (194 aa).

A tRNA-binding site is contributed by tyrosine 17. The active-site Proton acceptor is the histidine 22. 3 residues coordinate tRNA: phenylalanine 68, asparagine 70, and asparagine 116.

This sequence belongs to the PTH family. As to quaternary structure, monomer.

Its subcellular location is the cytoplasm. It catalyses the reaction an N-acyl-L-alpha-aminoacyl-tRNA + H2O = an N-acyl-L-amino acid + a tRNA + H(+). Hydrolyzes ribosome-free peptidyl-tRNAs (with 1 or more amino acids incorporated), which drop off the ribosome during protein synthesis, or as a result of ribosome stalling. Its function is as follows. Catalyzes the release of premature peptidyl moieties from peptidyl-tRNA molecules trapped in stalled 50S ribosomal subunits, and thus maintains levels of free tRNAs and 50S ribosomes. This is Peptidyl-tRNA hydrolase from Haemophilus influenzae (strain 86-028NP).